Here is a 327-residue protein sequence, read N- to C-terminus: Lipoyl synthase (327 aa).

[4Fe-4S] cluster is bound by residues Cys-74, Cys-79, Cys-85, Cys-100, Cys-104, Cys-107, and Ser-314. The Radical SAM core domain occupies Phe-86 to Lys-303.

The protein belongs to the radical SAM superfamily. Lipoyl synthase family. [4Fe-4S] cluster serves as cofactor.

Its subcellular location is the cytoplasm. The catalysed reaction is [[Fe-S] cluster scaffold protein carrying a second [4Fe-4S](2+) cluster] + N(6)-octanoyl-L-lysyl-[protein] + 2 oxidized [2Fe-2S]-[ferredoxin] + 2 S-adenosyl-L-methionine + 4 H(+) = [[Fe-S] cluster scaffold protein] + N(6)-[(R)-dihydrolipoyl]-L-lysyl-[protein] + 4 Fe(3+) + 2 hydrogen sulfide + 2 5'-deoxyadenosine + 2 L-methionine + 2 reduced [2Fe-2S]-[ferredoxin]. Its pathway is protein modification; protein lipoylation via endogenous pathway; protein N(6)-(lipoyl)lysine from octanoyl-[acyl-carrier-protein]: step 2/2. In terms of biological role, catalyzes the radical-mediated insertion of two sulfur atoms into the C-6 and C-8 positions of the octanoyl moiety bound to the lipoyl domains of lipoate-dependent enzymes, thereby converting the octanoylated domains into lipoylated derivatives. This Pseudomonas aeruginosa (strain LESB58) protein is Lipoyl synthase.